The primary structure comprises 791 residues: MAITAKPKAGVWAVLWDLLTTVDHKKIGLMYTATAFFAFALAGVFSLLIRTQLAVPNNQFLTGEQYNQILTLHGATMLFFFIIQAGLTGFGNFVVPLMLGARDVALPRVNAFSYWAFLGAIVLALMSYFFPGGAPSVGWTFYYPFSAQSESGVDFYLAAILLLGFSSLLGNANFVATIYNLRAQGMSLWKMPIYVWSVFAASVLNLFSLAGLTAATLLVLLERKIGLSWFNPAVGGDPVLFQQFFWFYSHPTVYVMLLPYLGILAEVASTFARKPLFGYRQMVWAQMGIVVLGTMVWAHHMFTVGESTLFQIAFAFFTALIAVPTGVKLFNIIGTLWGGKLQMKTPLYWVLGFIFNFLLGGITGVMLSMTPLDYQFHDSYFVVAHFHNVLMAGSGFGAFAGLYYWWPKMTGRMYDERLGRLHFWLFLVGYLLTFLPQYALGYLGMPRRYYTYNADIAGWPELNLLSTIGAYILGLGGLVWIYTMWKSLRSGPKAPDNPWGGYTLEWLTASPPKAHNFDVKLPTEFPSERPLYDWKKKGVELKPEDPAHIHLPNSSFWPFYSAATLFAFFVAVAALPVPNVWMWVFLALFAYGLVRWALEDEYSHPVEHHTVTGKSNAWMGMAWFIVSEVGLFAILIAGYLYLRLSGAATPPEERPALWLALLNTFLLVSSSFTVHFAHHDLRRGRFNPFRFGLLVTIILGVLFFLVQSWEFYQFYHHSSWQENLWTAAFFTIVGLHGLHVVIGGFGLILAYLQALRGKITLHNHGTLEAASMYWHLVDAVWLVIVTIFYVW.

The segment at 1–473 is COX1; the sequence is MAITAKPKAG…LLSTIGAYIL (473 aa). A helical membrane pass occupies residues 29 to 49; that stretch reads LMYTATAFFAFALAGVFSLLI. His-73 provides a ligand contact to Fe(II)-heme a. Transmembrane regions (helical) follow at residues 78 to 98, 111 to 131, 155 to 175, 201 to 221, 244 to 264, 282 to 302, 312 to 332, 347 to 367, 381 to 401, 423 to 443, 464 to 484, 566 to 586, 617 to 637, 657 to 677, 691 to 711, 729 to 749, and 771 to 791; these read LFFF…VPLM, AFSY…YFFP, FYLA…ANFV, ASVL…LVLL, FFWF…LGIL, MVWA…HHMF, IAFA…LFNI, LYWV…GVML, FVVA…AFAG, FWLF…LGYL, LLST…IYTM, FAFF…WVFL, AWMG…ILIA, LWLA…VHFA, FGLL…SWEF, FFTI…GLIL, and SMYW…FYVW. Positions 250, 254, 299, and 300 each coordinate Cu cation. A cross-link (1'-histidyl-3'-tyrosine (His-Tyr)) is located at residues 250 to 254; sequence HPTVY. Residue His-385 participates in heme a3 binding. Fe(II)-heme a is bound at residue His-387. Positions 545-791 are COX3; it reads DPAHIHLPNS…LVIVTIFYVW (247 aa).

The protein in the N-terminal section; belongs to the heme-copper respiratory oxidase family. This sequence in the C-terminal section; belongs to the cytochrome c oxidase subunit 3 family. In terms of assembly, possibly a heterodimer of A-protein (contains: cytochrome c oxidase subunits I and III) and subunit II. The A-protein could also present a precursor form of subunits I and III. Requires Cu(2+) as cofactor. Heme is required as a cofactor.

It localises to the cell membrane. The enzyme catalyses 4 Fe(II)-[cytochrome c] + O2 + 8 H(+)(in) = 4 Fe(III)-[cytochrome c] + 2 H2O + 4 H(+)(out). Its pathway is energy metabolism; oxidative phosphorylation. Its function is as follows. Cytochrome c oxidase is the component of the respiratory chain that catalyzes the reduction of oxygen to water. Subunits 1-3 form the functional core of the enzyme complex. Co I is the catalytic subunit of the enzyme. Electrons originating in cytochrome c are transferred via the copper A center of subunit 2 and heme a of subunit 1 to the bimetallic center formed by heme a3 and copper B. This cytochrome c oxidase shows proton pump activity across the membrane in addition to the electron transfer. The protein is Cytochrome c oxidase polypeptide I+III (caaA) of Thermus thermophilus (strain ATCC 27634 / DSM 579 / HB8).